The following is a 454-amino-acid chain: Divalent metal cation transporter MntH (454 aa).

Residues 1 to 21 (MSDAEATAPRSSWRFAGRDED) are disordered. 11 helical membrane passes run 45–65 (LFAF…PGNW), 78–98 (TLLF…ALAA), 122–142 (FVLW…EVIG), 153–173 (IPLI…LLLM), 182–202 (AFVI…IFVA), 220–240 (IVTN…TVMP), 275–295 (IALM…AVAF), 312–332 (LLSP…ALLA), 368–388 (GLAI…GTGQ), 389–409 (LLVF…VPLV), and 426–446 (GVAA…FKLL).

Belongs to the NRAMP family.

It localises to the cell inner membrane. Its function is as follows. H(+)-stimulated, divalent metal cation uptake system. This chain is Divalent metal cation transporter MntH, found in Mesorhizobium japonicum (strain LMG 29417 / CECT 9101 / MAFF 303099) (Mesorhizobium loti (strain MAFF 303099)).